A 361-amino-acid chain; its full sequence is 4-oxalomesaconate tautomerase (361 aa).

The protein belongs to the PrpF family.

The enzyme catalyses (1E)-4-oxobut-1-ene-1,2,4-tricarboxylate = 4-carboxy-2-hydroxy-cis,cis-muconate. Functionally, catalyzes the tautomerization of the 4-oxalomesaconic acid keto (OMAketo) generated by GalA dioxygenase to 4-oxalomesaconic acid enol (OMAenol). Mediates the second step in gallate degradation pathway. The chain is 4-oxalomesaconate tautomerase (galD) from Pseudomonas putida (strain ATCC 47054 / DSM 6125 / CFBP 8728 / NCIMB 11950 / KT2440).